Consider the following 95-residue polypeptide: Signal recognition particle 19 kDa protein (95 aa).

Belongs to the SRP19 family. In terms of assembly, part of the signal recognition particle protein translocation system, which is composed of SRP and FtsY. Archaeal SRP consists of a 7S RNA molecule of 300 nucleotides and two protein subunits: SRP54 and SRP19.

The protein localises to the cytoplasm. Functionally, involved in targeting and insertion of nascent membrane proteins into the cytoplasmic membrane. Binds directly to 7S RNA and mediates binding of the 54 kDa subunit of the SRP. The chain is Signal recognition particle 19 kDa protein from Staphylothermus marinus (strain ATCC 43588 / DSM 3639 / JCM 9404 / F1).